A 286-amino-acid chain; its full sequence is NAD kinase (286 aa).

Catalysis depends on aspartate 74, which acts as the Proton acceptor. Residues 74-75 (DG), 148-149 (ND), aspartate 178, alanine 186, 189-194 (TAYNLS), and glutamine 244 each bind NAD(+).

Belongs to the NAD kinase family. A divalent metal cation is required as a cofactor.

The protein localises to the cytoplasm. The catalysed reaction is NAD(+) + ATP = ADP + NADP(+) + H(+). Its function is as follows. Involved in the regulation of the intracellular balance of NAD and NADP, and is a key enzyme in the biosynthesis of NADP. Catalyzes specifically the phosphorylation on 2'-hydroxyl of the adenosine moiety of NAD to yield NADP. In Campylobacter jejuni subsp. jejuni serotype O:2 (strain ATCC 700819 / NCTC 11168), this protein is NAD kinase.